Reading from the N-terminus, the 37-residue chain is Cytochrome b6-f complex subunit 5 (37 aa).

Residues 5–25 (LLSGIVLGLIPITLAGLFVTA) traverse the membrane as a helical segment.

It belongs to the PetG family. In terms of assembly, the 4 large subunits of the cytochrome b6-f complex are cytochrome b6, subunit IV (17 kDa polypeptide, PetD), cytochrome f and the Rieske protein, while the 4 small subunits are PetG, PetL, PetM and PetN. The complex functions as a dimer.

Its subcellular location is the plastid. The protein localises to the chloroplast thylakoid membrane. Functionally, component of the cytochrome b6-f complex, which mediates electron transfer between photosystem II (PSII) and photosystem I (PSI), cyclic electron flow around PSI, and state transitions. PetG is required for either the stability or assembly of the cytochrome b6-f complex. In Zygnema circumcarinatum (Green alga), this protein is Cytochrome b6-f complex subunit 5.